Consider the following 221-residue polypeptide: Peptide methionine sulfoxide reductase MsrA (221 aa).

Residue Cys-54 is part of the active site.

The protein belongs to the MsrA Met sulfoxide reductase family.

It catalyses the reaction L-methionyl-[protein] + [thioredoxin]-disulfide + H2O = L-methionyl-(S)-S-oxide-[protein] + [thioredoxin]-dithiol. The catalysed reaction is [thioredoxin]-disulfide + L-methionine + H2O = L-methionine (S)-S-oxide + [thioredoxin]-dithiol. Functionally, has an important function as a repair enzyme for proteins that have been inactivated by oxidation. Catalyzes the reversible oxidation-reduction of methionine sulfoxide in proteins to methionine. The chain is Peptide methionine sulfoxide reductase MsrA from Methylobacterium sp. (strain 4-46).